Reading from the N-terminus, the 482-residue chain is Dihydrolipoyllysine-residue acetyltransferase component of pyruvate dehydrogenase complex, mitochondrial (482 aa).

The N-terminal 28 residues, 1 to 28, are a transit peptide targeting the mitochondrion; it reads MSAFVRVVPRISRSSVLTRSLRLQLRCY. Residues 34–110 form the Lipoyl-binding domain; it reads HTIIGMPALS…PVNKPIAVYV (77 aa). Lys75 carries the post-translational modification N6-lipoyllysine. The disordered stretch occupies residues 122 to 170; the sequence is FKLEDSGSDSKTSTKAQPAEPQAEKKQEAPAEETKTSAPEAKKSDVAAP. Basic and acidic residues predominate over residues 143 to 166; it reads QAEKKQEAPAEETKTSAPEAKKSD. The Peripheral subunit-binding (PSBD) domain maps to 175 to 212; that stretch reads FASPLAKTIALEKGISLKDVHGTGPRGRITKADIESYL. Residues 214–251 form a disordered region; the sequence is KSSKQSSQTSGAAAATPAAATSSTTAGSAPSPSSTASY. Positions 217–250 are enriched in low complexity; it reads KQSSQTSGAAAATPAAATSSTTAGSAPSPSSTAS. Catalysis depends on residues His455 and Asp459.

The protein belongs to the 2-oxoacid dehydrogenase family. Eukaryotic pyruvate dehydrogenase (PDH) complexes are organized as a core consisting of the oligomeric dihydrolipoamide acetyl-transferase (E2), around which are arranged multiple copies of pyruvate dehydrogenase (E1), dihydrolipoamide dehydrogenase (E3) and protein X (E3BP) bound by non-covalent bonds. It depends on (R)-lipoate as a cofactor.

It localises to the mitochondrion matrix. The catalysed reaction is N(6)-[(R)-dihydrolipoyl]-L-lysyl-[protein] + acetyl-CoA = N(6)-[(R)-S(8)-acetyldihydrolipoyl]-L-lysyl-[protein] + CoA. The pyruvate dehydrogenase complex catalyzes the overall conversion of pyruvate to acetyl-CoA and CO(2). This Saccharomyces cerevisiae (strain ATCC 204508 / S288c) (Baker's yeast) protein is Dihydrolipoyllysine-residue acetyltransferase component of pyruvate dehydrogenase complex, mitochondrial (LAT1).